We begin with the raw amino-acid sequence, 567 residues long: Microtubule-associated protein 70-1 (567 aa).

Positions 38–341 (VRVELTRLEN…AARSEAQLKD (304 aa)) form a coiled coil. Residues 220–440 (ILDRMHRQKV…SGMNVSTDSS (221 aa)) form a required for targeting to microtubules region. 2 disordered regions span residues 425 to 457 (KGHVNGSGMNVSTDSSEDKESNNSDEKANEFTS) and 534 to 567 (LEKEQDNKAKRFGSSSSQLPPGRTLPRSGSARNM). Over residues 440–453 (SEDKESNNSDEKAN) the composition is skewed to basic and acidic residues. Residues 516–545 (KKRRMEVAAMEKEMAALRLEKEQDNKAKRF) adopt a coiled-coil conformation.

The protein belongs to the MAP70 family.

The protein localises to the cytoplasm. The protein resides in the cytoskeleton. Plant-specific protein that interact with microtubules. This is Microtubule-associated protein 70-1 (MAP70.1) from Oryza sativa subsp. japonica (Rice).